We begin with the raw amino-acid sequence, 357 residues long: Set1 complex component swd2 (357 aa).

WD repeat units follow at residues 24–65, 110–149, 199–241, and 247–289; these read NFVG…KSLA, GHKQ…CQGL, PPHV…RVPS, and TQDG…QTVN.

This sequence belongs to the WD repeat SWD2 family. As to quaternary structure, component of the Set1 complex composed of ash2, sdc1, set1, shg1, spp1, swd1, swd2 and swd3.

It is found in the nucleus. Functionally, the Set1 complex specifically methylates 'Lys-4' of histone H3. This Schizosaccharomyces pombe (strain 972 / ATCC 24843) (Fission yeast) protein is Set1 complex component swd2.